We begin with the raw amino-acid sequence, 286 residues long: uncharacterized protein (286 aa).

A helical membrane pass occupies residues Pro8 to Ala28.

This sequence to M.jannaschii MJ1495.

The protein localises to the membrane. This is an uncharacterized protein from Methanocaldococcus jannaschii (strain ATCC 43067 / DSM 2661 / JAL-1 / JCM 10045 / NBRC 100440) (Methanococcus jannaschii).